We begin with the raw amino-acid sequence, 2314 residues long: Protein Ycf2 (2314 aa).

ATP is bound at residue 1653–1660; it reads GSIGTGRS.

The protein belongs to the Ycf2 family.

The protein resides in the plastid. It is found in the chloroplast stroma. Functionally, probable ATPase of unknown function. Its presence in a non-photosynthetic plant (Epifagus virginiana) and experiments in tobacco indicate that it has an essential function which is probably not related to photosynthesis. The protein is Protein Ycf2 of Piper cenocladum (Ant piper).